The chain runs to 163 residues: NADH-quinone oxidoreductase subunit I (163 aa).

4Fe-4S ferredoxin-type domains follow at residues 54-84 and 94-123; these read LRRY…IESE and IVYD…ETQI. [4Fe-4S] cluster contacts are provided by cysteine 64, cysteine 67, cysteine 70, cysteine 74, cysteine 103, cysteine 106, cysteine 109, and cysteine 113.

The protein belongs to the complex I 23 kDa subunit family. NDH-1 is composed of 14 different subunits. Subunits NuoA, H, J, K, L, M, N constitute the membrane sector of the complex. The cofactor is [4Fe-4S] cluster.

The protein localises to the cell inner membrane. It catalyses the reaction a quinone + NADH + 5 H(+)(in) = a quinol + NAD(+) + 4 H(+)(out). In terms of biological role, NDH-1 shuttles electrons from NADH, via FMN and iron-sulfur (Fe-S) centers, to quinones in the respiratory chain. The immediate electron acceptor for the enzyme in this species is believed to be ubiquinone. Couples the redox reaction to proton translocation (for every two electrons transferred, four hydrogen ions are translocated across the cytoplasmic membrane), and thus conserves the redox energy in a proton gradient. This Ruthia magnifica subsp. Calyptogena magnifica protein is NADH-quinone oxidoreductase subunit I.